Consider the following 486-residue polypeptide: Receptor-interacting serine/threonine-protein kinase 3 (486 aa).

Position 2 is a phosphoserine (Ser-2). The region spanning 22 to 292 (LKKLEFVGKG…DCEPKTNEVY (271 aa)) is the Protein kinase domain. Residues 28–36 (VGKGGFGVV) and Lys-51 each bind ATP. Asp-143 (proton acceptor) is an active-site residue. Ser-165 carries the post-translational modification Phosphoserine. Phosphothreonine is present on Thr-187. Ser-204 carries the post-translational modification Phosphoserine; by autocatalysis. Phosphothreonine; by autocatalysis is present on Thr-231. A Phosphoserine; by autocatalysis modification is found at Ser-232. Thr-257 bears the Phosphothreonine mark. Ser-304 and Ser-326 each carry phosphoserine. The segment at 312–333 (QHRSSGRNLSAREPSQRGTEMD) is disordered. At Thr-338 the chain carries Phosphothreonine. The tract at residues 349 to 388 (LEEPSGPVPGKCPERQAQDTSVGPATPARTSSDPVAGTPQ) is disordered. Ser-353, Ser-369, and Ser-380 each carry phosphoserine. The span at 366-381 (QDTSVGPATPARTSSD) shows a compositional bias: polar residues. Thr-392 is subject to Phosphothreonine. The short motif at 440-461 (LVFNNCSEVQIGNYNSLVAPPR) is the RIP homotypic interaction motif (RHIM) element. A disordered region spans residues 462 to 486 (TTASSSAKYDQAQFGRGRGWQPFHK). Position 477 is an omega-N-methylarginine (Arg-477).

This sequence belongs to the protein kinase superfamily. TKL Ser/Thr protein kinase family. Interacts (via RIP homotypic interaction motif) with RIPK1 (via RIP homotypic interaction motif); this interaction induces RIPK1 phosphorylation and formation of a RIPK1-RIPK3 necrosis-inducing complex. Interacts with MLKL; the interaction is direct and triggers necroptosis. Interacts with ZBP1 (via RIP homotypic interaction motif); interaction with ZBP1 activates RIPK3, triggering necroptosis. Upon TNF-induced necrosis, the RIPK1-RIPK3 dimer further interacts with PGAM5 and MLKL; the formation of this complex leads to PGAM5 phosphorylation and increase in PGAM5 phosphatase activity. Binds TRAF2 and is recruited to the TNFR-1 signaling complex. Interacts with PYGL, GLUL and GLUD1; these interactions result in activation of these metabolic enzymes. Interacts with BIRC2/c-IAP1, BIRC3/c-IAP2 and XIAP/BIRC4. Interacts with ARHGEF2. Interacts with PELI1 (via atypical FHA domain); the phosphorylated form at Thr-187 binds preferentially to PELI1. Interacts with BUB1B, TRAF2 and STUB1. Interacts with CASP6. Component of the AIM2 PANoptosome complex, a multiprotein complex that drives inflammatory cell death (PANoptosis). In terms of assembly, (Microbial infection) Interacts (via RIP homotypic interaction motif) with murid herpesvirus protein RIR1; this interaction disrupts RIP3-RIP1 interactions characteristic of TNF-alpha induced necroptosis, thereby suppressing this death pathway. Post-translationally, RIPK1 and RIPK3 undergo reciprocal auto- and trans-phosphorylation. Autophosphorylated following interaction with ZBP1. Phosphorylation of Ser-204 plays a role in the necroptotic function of RIPK3. Autophosphorylates at Thr-231 and Ser-232 following activation by ZBP1: phosphorylation at these sites is a hallmark of necroptosis and is required for binding MLKL. Phosphorylation at Thr-187 is important for its kinase activity, interaction with PELI1 and for its ability to mediate TNF-induced necroptosis. Polyubiquitinated with 'Lys-48' and 'Lys-63'-linked chains by BIRC2/c-IAP1 and BIRC3/c-IAP2, leading to activation of NF-kappa-B. Ubiquitinated by STUB1 leading to its subsequent proteasome-dependent degradation. Expressed in embryo and in adult spleen, liver, testis, heart, brain and lung.

It localises to the cytoplasm. The protein resides in the cytosol. It is found in the nucleus. The catalysed reaction is L-seryl-[protein] + ATP = O-phospho-L-seryl-[protein] + ADP + H(+). It carries out the reaction L-threonyl-[protein] + ATP = O-phospho-L-threonyl-[protein] + ADP + H(+). Its activity is regulated as follows. Activity is stimulated by ZBP1, which senses double-stranded Z-RNA structures. RIPK3-dependent necroptosis is inhibited by RIPK1: RIPK1 prevents the ZBP1-induced activation of RIPK3 via FADD-mediated recruitment of CASP8, which cleaves RIPK1 and limits TNF-induced necroptosis. Inhibited by type II inhibitor 1-(4-fluorophenyl)-N-[3-fluoro-4-(1H-pyrrolo[2,3-b]pyridin-4-yloxy)phenyl]-2-oxo-1,2-dihydropyridine-3-carboxamide. In terms of biological role, serine/threonine-protein kinase that activates necroptosis and apoptosis, two parallel forms of cell death. Necroptosis, a programmed cell death process in response to death-inducing TNF-alpha family members, is triggered by RIPK3 following activation by ZBP1. Activated RIPK3 forms a necrosis-inducing complex and mediates phosphorylation of MLKL, promoting MLKL localization to the plasma membrane and execution of programmed necrosis characterized by calcium influx and plasma membrane damage. In addition to TNF-induced necroptosis, necroptosis can also take place in the nucleus in response to orthomyxoviruses infection: following ZBP1 activation, which senses double-stranded Z-RNA structures, nuclear RIPK3 catalyzes phosphorylation and activation of MLKL, promoting disruption of the nuclear envelope and leakage of cellular DNA into the cytosol. Also regulates apoptosis: apoptosis depends on RIPK1, FADD and CASP8, and is independent of MLKL and RIPK3 kinase activity. Phosphorylates RIPK1: RIPK1 and RIPK3 undergo reciprocal auto- and trans-phosphorylation. In some cell types, also able to restrict viral replication by promoting cell death-independent responses. In response to flavivirus infection in neurons, promotes a cell death-independent pathway that restricts viral replication: together with ZBP1, promotes a death-independent transcriptional program that modifies the cellular metabolism via up-regulation expression of the enzyme ACOD1/IRG1 and production of the metabolite itaconate. Itaconate inhibits the activity of succinate dehydrogenase, generating a metabolic state in neurons that suppresses replication of viral genomes. RIPK3 binds to and enhances the activity of three metabolic enzymes: GLUL, GLUD1, and PYGL. These metabolic enzymes may eventually stimulate the tricarboxylic acid cycle and oxidative phosphorylation, which could result in enhanced ROS production. This is Receptor-interacting serine/threonine-protein kinase 3 from Mus musculus (Mouse).